A 354-amino-acid polypeptide reads, in one-letter code: Guanine nucleotide-binding protein G(i) subunit alpha-3 (354 aa).

Gly2 carries the N-myristoyl glycine lipid modification. Cys3 carries S-palmitoyl cysteine lipidation. A G-alpha domain is found at 32–354 (KEVKLLLLGA…KNNLKECGLY (323 aa)). The G1 motif stretch occupies residues 35 to 48 (KLLLLGAGESGKST). Residues Gly42, Glu43, Ser44, Gly45, Lys46, Ser47, Thr48, Asp150, Ser151, Leu175, Arg176, Thr177, Arg178, Val179, Lys180, Thr181, Val201, Gly203, Asn269, Lys270, Asp272, Leu273, Cys325, Ala326, and Thr327 each coordinate GTP. Ser47 serves as a coordination point for Mg(2+). The G2 motif stretch occupies residues 173–181 (DVLRTRVKT). Thr181 lines the Mg(2+) pocket. A G3 motif region spans residues 196-205 (FKMFDVGGQR). Positions 265–272 (ILFLNKKD) are G4 motif. A G5 motif region spans residues 324–329 (TCATDT).

It belongs to the G-alpha family. G(i/o/t/z) subfamily. As to quaternary structure, heterotrimeric G proteins are composed of 3 units; alpha, beta and gamma. The alpha subunit contains the guanine nucleotide binding site. GTP binding causes dissociation of the heterotrimer, liberating the individual subunits so that they can interact with downstream effector proteins. Forms a complex with CCDC88A/GIV and EGFR which leads to enhanced EGFR signaling and triggering of cell migration; ligand stimulation is required for recruitment of GNAI3 to the complex. Interacts (inactive GDP-bound form) with CCDC88A/GIV (via GBA motif); the interaction leads to activation of GNAI3. Interacts (inactive GDP-bound form) with CCDC88C/DAPLE (via GBA motif); the interaction leads to activation of GNAI3. Interacts (inactive GDP-bound form) with NUCB1 (via GBA motif) and NUCB2 (via GBA motif); the interaction leads to activation of GNAI3. Interacts (inactive GDP-bound form) with PLCD4 (via GBA motif); the interaction leads to activation of GNAI3. Interacts with INSR; the interaction is probably mediated by CCDC88A/GIV. Interacts with GPSM1. Interacts (GDP-bound form) with GPSM2 (via GoLoco domains). Does not interact with RGS2. Interacts with RGS8 and RGS10; this strongly enhances the intrinsic GTPase activity. Interacts with RGS16; this strongly enhances the intrinsic GTPase activity. Interacts with RGS12. Interacts (via active GTP- or inactive GDP-bound form) with RGS14. Interacts (via active GTP-bound form) with TRPC5 (via ANK repeats) in a homotetrameric ion channel; the interaction is direct and activates the channel activity.

The protein localises to the cytoplasm. Its subcellular location is the cell membrane. It is found in the cytoskeleton. It localises to the microtubule organizing center. The protein resides in the centrosome. Its function is as follows. Heterotrimeric guanine nucleotide-binding proteins (G proteins) function as transducers downstream of G protein-coupled receptors (GPCRs) in numerous signaling cascades. The alpha chain contains the guanine nucleotide binding site and alternates between an active, GTP-bound state and an inactive, GDP-bound state. Signaling by an activated GPCR promotes GDP release and GTP binding. The alpha subunit has a low GTPase activity that converts bound GTP to GDP, thereby terminating the signal. Both GDP release and GTP hydrolysis are modulated by numerous regulatory proteins. Signaling is mediated via effector proteins, such as adenylate cyclase. Inhibits adenylate cyclase activity, leading to decreased intracellular cAMP levels. Stimulates the activity of receptor-regulated K(+) channels. The active GTP-bound form prevents the association of RGS14 with centrosomes and is required for the translocation of RGS14 from the cytoplasm to the plasma membrane. May play a role in cell division. The active GTP-bound form activates the calcium permeant TRPC5 ion channels. The protein is Guanine nucleotide-binding protein G(i) subunit alpha-3 (GNAI3) of Cricetulus griseus (Chinese hamster).